The following is a 444-amino-acid chain: MSQSYINVIGAGLAGSEAAYQIAKRGIPVKLYEMRGVKATPQHKTSNFAELVCSNSFRGDSLTNAVGLLKEEMRRLDSIIMRAGEAHRVPAGGAMAVDRVGYAEAVTAELENNPLIEVIRGEITEIPNDAITVIATGPLTSDALAEKIHALNGGEGFYFYDAAAPIIDKSTINMDKVYLKSRYDKGEAAYLNCPMTKEEFLAFHEALTTAEEAPLNSFEKEKYFEGCMPIEVMAKRGIKTMLYGPMKPVGLEYPDDYKGPRDGDYKTPYAVVQLRQDNAAGSLYNMVGFQTHLKWGEQKRVFQMIPGLENAEFVRYGVMHRNSYMDSPNLLKQTFQSRANENLFFAGQMTGVEGYVESAASGLVAGINAARLFKGEEAIIFPETTAIGSLPHYVTHTDSKHFQPMNVNFGIIKELEGKRIRDKKERYEAIAERSLKDLEAFLNS.

Position 10–15 (10–15 (GAGLAG)) interacts with FAD.

Belongs to the MnmG family. TrmFO subfamily. Requires FAD as cofactor.

It localises to the cytoplasm. The catalysed reaction is uridine(54) in tRNA + (6R)-5,10-methylene-5,6,7,8-tetrahydrofolate + NADH + H(+) = 5-methyluridine(54) in tRNA + (6S)-5,6,7,8-tetrahydrofolate + NAD(+). It catalyses the reaction uridine(54) in tRNA + (6R)-5,10-methylene-5,6,7,8-tetrahydrofolate + NADPH + H(+) = 5-methyluridine(54) in tRNA + (6S)-5,6,7,8-tetrahydrofolate + NADP(+). Its function is as follows. Catalyzes the folate-dependent formation of 5-methyl-uridine at position 54 (M-5-U54) in all tRNAs. The polypeptide is Methylenetetrahydrofolate--tRNA-(uracil-5-)-methyltransferase TrmFO (Streptococcus uberis (strain ATCC BAA-854 / 0140J)).